The primary structure comprises 551 residues: MEEAELVKERLQAITDKRKIQEEISQKRLKIEEEKLRHQHLKKKALREKWLLDGIGSRKEQEEMKKQNQQDQHQIQVLEQSILRLEKEIQDLEKAELQISTNEEAILKKLKSVERTTEDIIRSVKVEKEETSGASIEDIYANIPDLPKSYVPSRLRKERNEGIEDDEQNRKALYAMEIKVEKDLKTGESTVLSSIPLPSDDFKGTGIKVYDDGQKSVYAVSSNHSAAYNGTDGLAPVEVEDLLRQASERNSKSPTEYHDPVYANPFCRPTTPQREKATPGPNFQERIKMKARGLGKDMNGSIHTMNNGLSEERGSSVNHISPIRPIPHPRSMTQQAEERPHSPQKRQMTPWEESDVTQDKCAPSAKSQLSPGEAPVGKSERQGSSPTCQEDEEDVRYNIVHSLPSDVEDTEPVTMIFMGYQRADDSEEEKKLLTGYDGIIRAELVVIDDEEEEGEGEAEKPSYHPIAPHSQVFQPAKPTPLPRKRAEVNPHENTNHKSPHKNSISLKEQEESLGSPIHQSPLDIQIAGDGTEDPSLTALRMRMAKLGKKVI.

Methionine 1 is modified (N-acetylmethionine). Residues glutamate 2–isoleucine 106 are a coiled coil. Lysine 125 participates in a covalent cross-link: Glycyl lysine isopeptide (Lys-Gly) (interchain with G-Cter in SUMO2). The residue at position 135 (serine 135) is a Phosphoserine. Lysine 179 is covalently cross-linked (Glycyl lysine isopeptide (Lys-Gly) (interchain with G-Cter in SUMO1); alternate). Lysine 179 is covalently cross-linked (Glycyl lysine isopeptide (Lys-Gly) (interchain with G-Cter in SUMO2); alternate). Basic and acidic residues predominate over residues serine 247–aspartate 259. 2 disordered regions span residues serine 247 to glutamate 393 and glutamate 450 to aspartate 529. The residue at position 271 (threonine 271) is a Phosphothreonine. 4 positions are modified to phosphoserine: serine 321, serine 370, serine 384, and serine 385. A compositionally biased stretch (basic and acidic residues) spans lysine 484 to asparagine 495. Phosphoserine is present on residues serine 498, serine 515, and serine 520.

The protein belongs to the paralemmin family. Interacts with GLUL. Cell projection, dendrite. Cell projection, dendritic spine. Post-translationally, phosphorylated.

The protein resides in the cytoplasm. It localises to the cell projection. Its subcellular location is the dendrite. It is found in the dendritic spine. The chain is Palmdelphin (PALMD) from Sus scrofa (Pig).